A 260-amino-acid polypeptide reads, in one-letter code: Snake venom serine protease KN5 (260 aa).

Residues 1–18 (MVLIRVLANLLILQLSYA) form the signal peptide. A propeptide spanning residues 19–24 (QKSSEL) is cleaved from the precursor. One can recognise a Peptidase S1 domain in the interval 25–251 (VIGGDECNIN…HLDWIQSIIA (227 aa)). 5 disulfides stabilise this stretch: C31/C165, C100/C258, C144/C212, C176/C191, and C202/C227. H67 (charge relay system) is an active-site residue. Residue N105 is glycosylated (N-linked (GlcNAc...) asparagine). D112 functions as the Charge relay system in the catalytic mechanism. N-linked (GlcNAc...) asparagine glycans are attached at residues N124 and N172. Catalysis depends on S206, which acts as the Charge relay system. N-linked (GlcNAc...) asparagine glycosylation is found at N213 and N255.

The protein belongs to the peptidase S1 family. Snake venom subfamily. In terms of assembly, monomer. Expressed by the venom gland.

It is found in the secreted. Functionally, snake venom serine protease that may act in the hemostasis system of the prey. This Trimeresurus stejnegeri (Chinese green tree viper) protein is Snake venom serine protease KN5.